The following is a 457-amino-acid chain: tRNA-2-methylthio-N(6)-dimethylallyladenosine synthase (457 aa).

One can recognise an MTTase N-terminal domain in the interval 2–119 (KKVFIKTFGC…LPELIDARRR (118 aa)). [4Fe-4S] cluster contacts are provided by Cys11, Cys48, Cys82, Cys156, Cys160, and Cys163. A Radical SAM core domain is found at 142–375 (RVEGPSAFVS…QATIDANMAR (234 aa)). A TRAM domain is found at 378–448 (EGMVGSVQRI…PHSLRGDVVE (71 aa)).

The protein belongs to the methylthiotransferase family. MiaB subfamily. As to quaternary structure, monomer. Requires [4Fe-4S] cluster as cofactor.

Its subcellular location is the cytoplasm. The enzyme catalyses N(6)-dimethylallyladenosine(37) in tRNA + (sulfur carrier)-SH + AH2 + 2 S-adenosyl-L-methionine = 2-methylsulfanyl-N(6)-dimethylallyladenosine(37) in tRNA + (sulfur carrier)-H + 5'-deoxyadenosine + L-methionine + A + S-adenosyl-L-homocysteine + 2 H(+). Functionally, catalyzes the methylthiolation of N6-(dimethylallyl)adenosine (i(6)A), leading to the formation of 2-methylthio-N6-(dimethylallyl)adenosine (ms(2)i(6)A) at position 37 in tRNAs that read codons beginning with uridine. The protein is tRNA-2-methylthio-N(6)-dimethylallyladenosine synthase of Ralstonia nicotianae (strain ATCC BAA-1114 / GMI1000) (Ralstonia solanacearum).